We begin with the raw amino-acid sequence, 805 residues long: MPRIIIKGGVWRNTEDEILKAAVMKYGKNQWSRIASLLHRKSAKQCKARWYEWLDPSIKKTEWSREEDEKLLHLAKLMPTQWRTIAPLIGRTAAQCLERYEYLLDQAQAKEGDKDEGDDPRKLRPGEIDPNPETKPARPDPIDMDEDELEMLSEARARLANTQGKKAKRKAREKQLEEARRLAALQKRRELRAAGIDIRKHRKKKRGVDYNAEIPFEKKPASGFYDTSDENLPDYQPDFKRLRQDHLEGKMRDEIEQQERKKDKERMKKKKESDLPGAVMQINKMNNPDHVKKRSKLVLPKPQISDGELEEIVKMGYASEVARASVENGGQASDALLSEYSVTPAINKALRTPRTPAEQDTVLQEAQNILALSNVDTPLKGGLNTPMHESDFQGVTPRQQAIQTPNMLLSTPYRTPGEGSGSTPRQGMTPRGAIGTPSQRSVRDKLNINPEDAVMEEYESECAAKQQQSEAKEQLLAGLASLPAPSNDFEIVLPETPAEASEEHKPMDFVEDAADIDERALALRAKQEELERRRRSQAVQRELPRPSNVNTSVLRPTNVEPPLSALQMAEELIKKEMIVMLRNDIINHPTSQQIESLTNKKTRNAAQAVITGNRAALERDPMENFTDEELSSAKNLLRQEMDFVKSKMAHSDLPLEAYSKVWEECYAQVLFLPSQQRYTRAAMASKKDRLESLEKRLELNRYQMTEDAKKAAKIEKKLKVLLGGYQTRAVGLTKQLSDLHEQLEQSQVEMTTFQALRNQELQAIPKRLEALKEDVQRQTEREKQLQAQYSELLYERDSLLSKLQI.

2 consecutive HTH myb-type domains span residues Met-1 to Ile-58 and Lys-59 to Gln-108. 2 consecutive DNA-binding regions (H-T-H motif) follow at residues Trp-31–Leu-54 and Trp-82–Leu-104. Basic and acidic residues predominate over residues Gln-108–Glu-127. Disordered stretches follow at residues Gln-108 to Asp-143, His-246 to Lys-293, Leu-409 to Val-442, and Leu-530 to Pro-556. A coiled-coil region spans residues Ile-142 to Ala-193. Residues His-246–Asp-274 are compositionally biased toward basic and acidic residues. Coiled coils occupy residues Glu-511–Glu-542 and Tyr-678–Gln-804.

The protein belongs to the CEF1 family. As to quaternary structure, component of the precatalytic, catalytic and postcatalytic spliceosome complexes.

It localises to the nucleus. It is found in the cytoplasm. In terms of biological role, DNA-binding protein involved in cell cycle control. May act as a transcription activator. Plays a role in pre-mRNA splicing as core component of precatalytic, catalytic and postcatalytic spliceosomal complexes. May also play a role in the response to DNA damage (DDR). In Nematostella vectensis (Starlet sea anemone), this protein is Cell division cycle 5-related protein (cdc5l).